Consider the following 205-residue polypeptide: Ribonuclease HII (205 aa).

Residues 1 to 203 (MKAGIDEAGK…VSNLRQKTLD (203 aa)) form the RNase H type-2 domain. Residues aspartate 6 and glutamate 7 each coordinate a divalent metal cation. Position 46 (arginine 46) interacts with substrate. Aspartate 101 contacts a divalent metal cation. Residues lysine 143, arginine 146, and tyrosine 164 each coordinate substrate.

The protein belongs to the RNase HII family. Requires Mn(2+) as cofactor. Mg(2+) serves as cofactor.

Its subcellular location is the cytoplasm. The catalysed reaction is Endonucleolytic cleavage to 5'-phosphomonoester.. Its function is as follows. Endonuclease that specifically degrades the RNA of RNA-DNA hybrids. The sequence is that of Ribonuclease HII (rnhB) from Archaeoglobus fulgidus (strain ATCC 49558 / DSM 4304 / JCM 9628 / NBRC 100126 / VC-16).